Here is a 305-residue protein sequence, read N- to C-terminus: Superkiller complex protein 8 (305 aa).

7 WD repeats span residues 14-57 (AHED…LEMQ), 62-101 (GHQL…QIRS), 104-143 (AGPV…KEYS), 146-187 (TRGK…HTLE), 188-227 (GHAM…LAAT), 230-269 (GHGS…CVHT), and 272-305 (DHQD…DCPI).

This sequence belongs to the SKI8 family. As to quaternary structure, component of the PAF1 complex. Component of the SKI complex.

The protein localises to the nucleus. It is found in the cytoplasm. Functionally, component of the PAF1 complex (PAF1C) which has multiple functions during transcription by RNA polymerase II and is implicated in regulation of development and maintenance of embryonic stem cell pluripotency. PAF1C associates with RNA polymerase II through interaction with POLR2A CTD non-phosphorylated and 'Ser-2'- and 'Ser-5'-phosphorylated forms and is involved in transcriptional elongation, acting both independently and synergistically with TCEA1 and in cooperation with the DSIF complex and HTATSF1. Also acts as a component of the SKI complex, a multiprotein complex that assists the RNA-degrading exosome during the mRNA decay and quality-control pathways. The SKI complex catalyzes mRNA extraction from 80S ribosomal complexes in the 3'-5' direction and channels mRNA to the cytosolic exosome for degradation. The chain is Superkiller complex protein 8 (skic8) from Xenopus laevis (African clawed frog).